The following is a 70-amino-acid chain: Acyl carrier protein (70 aa).

A Carrier domain is found at 2–70; sequence SDIADRVKKI…ETIQTFGDAP (69 aa). At S37 the chain carries O-(pantetheine 4'-phosphoryl)serine.

It belongs to the acyl carrier protein (ACP) family. 4'-phosphopantetheine is transferred from CoA to a specific serine of apo-ACP by AcpS. This modification is essential for activity because fatty acids are bound in thioester linkage to the sulfhydryl of the prosthetic group.

It is found in the cytoplasm. The protein operates within lipid metabolism; fatty acid biosynthesis. In terms of biological role, carrier of the growing fatty acid chain in fatty acid biosynthesis. This is Acyl carrier protein from Cereibacter sphaeroides (Rhodobacter sphaeroides).